The chain runs to 546 residues: Peptidoglycan transport ATP-binding protein YejF (546 aa).

2 consecutive ABC transporter domains span residues 12 to 261 (VRDL…RHLL) and 291 to 530 (IKAG…KALL). Residues 46–53 (GESGSGKS) and 323–330 (GESGSGKT) each bind ATP.

The protein belongs to the ABC transporter superfamily. As to quaternary structure, the complex is composed of one ATP-binding protein (YejF), two transmembrane proteins (YejB and YejE) and a solute-binding protein (YepA or YejA).

It is found in the cell inner membrane. In terms of biological role, part of the ABC transporter complex YejBEF-YepA involved in the uptake of muropeptides, the breakdown products of cell wall peptidoglycan. The import of muropeptides into the cell enables peptidoglycan recycling, which is vital for cell wall integrity in this bacterium. Is also probably part of the ABC transporter complex YejABEF, which is likely involved in broad-spectrum peptide import. Responsible for energy coupling to the transport system. The protein is Peptidoglycan transport ATP-binding protein YejF of Agrobacterium fabrum (strain C58 / ATCC 33970) (Agrobacterium tumefaciens (strain C58)).